The following is a 769-amino-acid chain: Portal protein (769 aa).

Residues 458 to 479 (LEGYVNNLFKTIEGLKDVNSDL) are putative leucine zipper motif. Disordered stretches follow at residues 654–675 (RGPR…DDER) and 750–769 (RQLT…DRRS). The segment covering 760–769 (VGCERRDRRS) has biased composition (basic and acidic residues).

Belongs to the herpesviridae portal protein family. As to quaternary structure, homododecamerizes. Interacts with terminase subunits TRM1 and TRM3.

Its subcellular location is the virion. The protein resides in the host nucleus. In terms of biological role, forms a portal in the viral capsid through which viral DNA is translocated during DNA packaging. Assembles as a dodecamer at a single fivefold axe of the T=16 icosahedric capsid. Binds to the molecular motor that translocates the viral DNA, termed terminase. This is Portal protein (54) from Homo sapiens (Human).